The sequence spans 208 residues: MKPKFIVIEGLEGAGKSTAIALCQSFLNSKKIDFINVREPGGTPLAESLRTLVKAQHDEEIAFETELLIMYAARSQLMHNVINPALEQGQWVLADRHDLSSQAYQGGGRGISANTLASLSSMVLKGLKPDLTIYLDIDPVIGLERAKGRGELDRIEQEAIEFFQRTRMRYLELANDDNSIKTVDANQSIEHVHRDITNVLRTFFAEQK.

ATP is bound at residue 10–17 (GLEGAGKS).

This sequence belongs to the thymidylate kinase family.

The catalysed reaction is dTMP + ATP = dTDP + ADP. Functionally, phosphorylation of dTMP to form dTDP in both de novo and salvage pathways of dTTP synthesis. This chain is Thymidylate kinase, found in Pseudoalteromonas translucida (strain TAC 125).